The following is a 678-amino-acid chain: MFQDNPLLAQLKQKIQETLPKKEGTIKASDKGFGFLEVDSKTSYFVPPPYMKKCMHGDKVVAFIRTENEREVAEPSELIEQSLTRFIGRVKLFKGKLNVAPDHPQLKKLSLKAKTKKGLNEADFQEGDWVVAHLVRHPLKGDDGFFVQISHKITDANDKIAPWWVTLAENDLPNSEPAGIDDWQLKDDADLVREDLTALPFVTIDGESTKDMDDALYAQQLPNGDFALTIAIADPTAYITPEDEMDKVARERGFTIYLPGRNIPMLPRDLADELCSLMENQVRPALCCSVTIRKDGVIGDDIRFFAANIKSHARLVYDHVSDWLETGSSEQWQPSEEIAQVVRDLYAFSQARANWRETHAVVFPDRPDYRFELSADNDVVAIHADMRRTANRLVEESMITANICAGKTLQTTFGFGVFNTHAGFKAEKMADVVELMAVNGAPNADAETLATVEGFAALRRWLATQETSYLDNRIRKYQSYSEIGNQPLPHFAMGLDVYATWTSPIRKYGDMINHRLLKAHILGKAPVQTPDETVGEELALHRKHHKIAERNVADWLYARTLADEPAKETRFQAEIFDINRPGMRVRLLENGAMAFIPGALILDNKERIECNGEDGTVLIDKEVVYKLGDVLEIVLTEVNQENRSLVGKPTQVFADLVSETQTSAEQPAEGAENNEPQV.

The RNB domain maps to 193-521 (REDLTALPFV…INHRLLKAHI (329 aa)). The 83-residue stretch at 568–650 (ETRFQAEIFD…ENRSLVGKPT (83 aa)) folds into the S1 motif domain. The interval 659–678 (ETQTSAEQPAEGAENNEPQV) is disordered.

The protein belongs to the RNR ribonuclease family. RNase II subfamily.

The protein localises to the cytoplasm. It carries out the reaction Exonucleolytic cleavage in the 3'- to 5'-direction to yield nucleoside 5'-phosphates.. Functionally, involved in mRNA degradation. Hydrolyzes single-stranded polyribonucleotides processively in the 3' to 5' direction. The polypeptide is Exoribonuclease 2 (Vibrio cholerae serotype O1 (strain ATCC 39315 / El Tor Inaba N16961)).